The primary structure comprises 677 residues: Methionine--tRNA ligase (677 aa).

Residues 15–25 (PYANGSIHLGH) carry the 'HIGH' region motif. Positions 146, 149, 159, and 162 each coordinate Zn(2+). The short motif at 333-337 (KMSKS) is the 'KMSKS' region element. Position 336 (lysine 336) interacts with ATP. The tRNA-binding domain occupies 575–677 (DFAKVDLRVA…AGAKPGHQVK (103 aa)).

It belongs to the class-I aminoacyl-tRNA synthetase family. MetG type 1 subfamily. In terms of assembly, homodimer. It depends on Zn(2+) as a cofactor.

The protein localises to the cytoplasm. The catalysed reaction is tRNA(Met) + L-methionine + ATP = L-methionyl-tRNA(Met) + AMP + diphosphate. In terms of biological role, is required not only for elongation of protein synthesis but also for the initiation of all mRNA translation through initiator tRNA(fMet) aminoacylation. The polypeptide is Methionine--tRNA ligase (Escherichia coli O157:H7).